Reading from the N-terminus, the 510-residue chain is Leucine-rich repeat-containing protein 14B (510 aa).

The LRR 1; degenerate repeat unit spans residues 100–137; the sequence is SNRLRVADFTGIQDVQVQQCPCGRALGRWGRTKVLART. The LRR 2; degenerate repeat unit spans residues 181 to 205; the sequence is QVCCPSLRADSLSPGQLLQVLGLAG. Residues 234–273 form an LRR 4; degenerate repeat; it reads FPQLTSLTLPTKAFDAPPTCAPDPEGEDLLLTSIAWELSQ. 5 LRR repeats span residues 274-298, 299-330, 331-349, 355-382, and 383-407; these read MNQL…LSPL, KTPL…AHLE, VLDL…TFFR, AQTL…GLSP, and CSQL…LFAA.

This sequence belongs to the PRAME family. LRRC14 subfamily.

The chain is Leucine-rich repeat-containing protein 14B from Mus musculus (Mouse).